Reading from the N-terminus, the 306-residue chain is MDALKSAGRALIRSPSLAKQSWAGGRHRKLPENWTDTRETLLEGMVFSLKYLGMTLVERPKGEELSAAAVKRIVATAKASGKKLQKVTLKVSPRGIILTDSLTSQLIENVSIYRISYCTAQMHDKVFAYIAQSQQNESLECHAFLCTKRKVAQAVTLTVAQAFKVAFEFWQVSKEEKEKREKANQEGGDVPGTRRDSTPSLKTSVATGNLLDLEELAKAPLSTVSANTKNMDDALRPQVLGNNSVVWELDDGLDEAFSRLAQSRTNPQVLDTGLTAQDIHYAQCLSPTDWDKPDSSGFDQDDVFSF.

Residue methionine 1 is modified to N-acetylmethionine. Serine 14 carries the phosphoserine modification. The 125-residue stretch at 44 to 168 folds into the PID domain; it reads GMVFSLKYLG…VAQAFKVAFE (125 aa). The tract at residues 178-204 is disordered; it reads EKREKANQEGGDVPGTRRDSTPSLKTS. A phosphoserine mark is found at serine 197 and serine 200. The short motif at 210–214 is the Clathrin box element; it reads LLDLE. The interval 247-274 is AP-2 complex binding; sequence WELDDGLDEAFSRLAQSRTNPQVLDTGL. Residues 255–264 carry the [DE]-X(1,2)-F-X-X-[FL]-X-X-X-R motif motif; it reads EAFSRLAQSR.

In terms of assembly, interacts (via PID domain) with LDLR (via NPXY motifs). Binds to soluble clathrin trimers. Interacts with AP2B1; the interaction mediates the association with the AP-2 complex. Interacts with VLDLR. Interacts with LRP2.

The protein localises to the cytoplasm. Adapter protein (clathrin-associated sorting protein (CLASP)) required for efficient endocytosis of the LDL receptor (LDLR) in polarized cells such as hepatocytes and lymphocytes, but not in non-polarized cells (fibroblasts). May be required for LDL binding and internalization but not for receptor clustering in coated pits. May facilitate the endocytosis of LDLR and LDLR-LDL complexes from coated pits by stabilizing the interaction between the receptor and the structural components of the pits. May also be involved in the internalization of other LDLR family members. Binds to phosphoinositides, which regulate clathrin bud assembly at the cell surface. Required for trafficking of LRP2 to the endocytic recycling compartment which is necessary for LRP2 proteolysis, releasing a tail fragment which translocates to the nucleus and mediates transcriptional repression. The protein is Low density lipoprotein receptor adapter protein 1 of Rattus norvegicus (Rat).